The chain runs to 466 residues: MTASQDFVVKDISLADWGRRELDIAETEMPGLMAAREEFGKSQPLKGARISGSLHMTIQTAVLIETLKVLGAEVRWASCNIFSTQDHAAAAIAATGTPVFAVKGETLEEYWTYTDQIFQWPDGEPSNMILDDGGDATMYILIGARAEAGEDVLSNPQSEEEEVLFAQIKKRMAATPGFFTKQRAAIKGVTEETTTGVNRLYQLQKKGLLPFPAINVNDSVTKSKFDNKYGCKESLVDGIRRGTDVMMAGKVAVVCGYGDVGKGSAQSLAGAGARVKVTEVDPICALQAAMDGFEVVTLDDAASTADIVVTTTGNKDVITIDHMRKMKDMCIVGNIGHFDNEIQVAALRNLKWTNVKPQVDLIEFPDGKRLILLSEGRLLNLGNATGHPSFVMSASFTNQVLGQIELFTRTDAYKNEVYVLPKHLDEKVARLHLDKLGAKLTVLSEEQAAYIGVTPQGPFKSEHYRY.

Positions 57, 132, and 192 each coordinate substrate. Residue 193–195 (TTT) coordinates NAD(+). Substrate-binding residues include Lys222 and Asp226. NAD(+)-binding positions include Asn227, 256–261 (GYGDVG), Glu279, Asn314, 335–337 (IGH), and Asn380.

This sequence belongs to the adenosylhomocysteinase family. NAD(+) is required as a cofactor.

It localises to the cytoplasm. It catalyses the reaction S-adenosyl-L-homocysteine + H2O = L-homocysteine + adenosine. It participates in amino-acid biosynthesis; L-homocysteine biosynthesis; L-homocysteine from S-adenosyl-L-homocysteine: step 1/1. Functionally, may play a key role in the regulation of the intracellular concentration of adenosylhomocysteine. The protein is Adenosylhomocysteinase of Brucella melitensis biotype 2 (strain ATCC 23457).